The chain runs to 148 residues: Universal stress protein YxiE (148 aa).

The first 18 residues, 1-18, serve as a signal peptide directing secretion; it reads MFNKMLVAIDGSDMSAKA.

Belongs to the universal stress protein A family.

The sequence is that of Universal stress protein YxiE (yxiE) from Bacillus subtilis (strain 168).